The primary structure comprises 375 residues: Growth/differentiation factor 8 (375 aa).

The signal sequence occupies residues 1–18; sequence MQKLQISVYIYLFMLIVA. A propeptide spanning residues 19–266 is cleaved from the precursor; sequence GPVDLNENSE…VTDTPKRSRR (248 aa). N-linked (GlcNAc...) asparagine glycans are attached at residues asparagine 47 and asparagine 71. 4 disulfide bridges follow: cysteine 272/cysteine 282, cysteine 281/cysteine 340, cysteine 309/cysteine 372, and cysteine 313/cysteine 374.

It belongs to the TGF-beta family. In terms of assembly, homodimer; disulfide-linked. Interacts with WFIKKN2, leading to inhibit its activity. Interacts with FSTL3. Synthesized as large precursor molecule that undergoes proteolytic cleavage to generate an N-terminal propeptide and a disulfide linked C-terminal dimer, which is the biologically active molecule. The circulating form consists of a latent complex of the C-terminal dimer and other proteins, including its propeptide, which maintain the C-terminal dimer in a latent, inactive state. Ligand activation requires additional cleavage of the prodomain by a tolloid-like metalloproteinase.

It is found in the secreted. Functionally, acts specifically as a negative regulator of skeletal muscle growth. This Bos gaurus (Seladang) protein is Growth/differentiation factor 8 (MSTN).